The primary structure comprises 170 residues: Cytochrome b6-f complex subunit 4 (170 aa).

Helical transmembrane passes span 46–66 (LLFM…GLSV), 105–125 (LLGI…PFIE), and 141–161 (TVFL…TLPL).

The protein belongs to the cytochrome b family. PetD subfamily. The 4 large subunits of the cytochrome b6-f complex are cytochrome b6, subunit IV (17 kDa polypeptide, PetD), cytochrome f and the Rieske protein, while the 4 small subunits are PetG, PetL, PetM and PetN. The complex functions as a dimer.

It localises to the cellular thylakoid membrane. Its function is as follows. Component of the cytochrome b6-f complex, which mediates electron transfer between photosystem II (PSII) and photosystem I (PSI), cyclic electron flow around PSI, and state transitions. This chain is Cytochrome b6-f complex subunit 4, found in Synechococcus sp. (strain JA-2-3B'a(2-13)) (Cyanobacteria bacterium Yellowstone B-Prime).